We begin with the raw amino-acid sequence, 532 residues long: Bone morphogenetic protein receptor type-1A (532 aa).

An N-terminal signal peptide occupies residues 1-23 (MPQLYIYIRLLGAYLFIISRVQG). The Extracellular segment spans residues 24–152 (QNLDSMLHGT…IGPFFDGSIR (129 aa)). 3 cysteine pairs are disulfide-bonded: Cys-61–Cys-82, Cys-63–Cys-67, and Cys-76–Cys-100. Asn-73 carries N-linked (GlcNAc...) asparagine glycosylation. The tract at residues 107-109 (DFQ) is mediates specificity for BMP ligand. 2 cysteine pairs are disulfide-bonded: Cys-110–Cys-124 and Cys-125–Cys-130. The helical transmembrane segment at 153-176 (WLVLLISMAVCIIAMIIFSSCFCY) threads the bilayer. The Cytoplasmic portion of the chain corresponds to 177–532 (KHYCKSISSR…KMVESQDVKI (356 aa)). Residues 204-233 (ESLKDLIDQSQSSGSGSGLPLLVQRTIAKQ) form the GS domain. The Protein kinase domain maps to 234 to 525 (IQMVRQVGKG…RIKKTLAKMV (292 aa)). ATP is bound by residues 240 to 248 (VGKGRYGEV) and Lys-261. The active-site Proton acceptor is the Asp-362.

It belongs to the protein kinase superfamily. TKL Ser/Thr protein kinase family. TGFB receptor subfamily. Interacts with low affinity with GDF5; positively regulates chondrocyte differentiation. Interacts with BMP4. Interacts with SCUBE3. Interacts with TSC22D1/TSC-22. Interacts with BMP2; the interaction may induce HAMP expression. Interacts with BMP6. Interacts with heterodimers composed of BMP2 and BMP6 in vitro; the interaction may induce HAMP expression. Interacts with TGFBR3. It depends on Mg(2+) as a cofactor. The cofactor is Mn(2+). In terms of processing, glycosylated. As to expression, highly expressed in skeletal muscle.

The protein localises to the cell membrane. The protein resides in the cell surface. The catalysed reaction is L-threonyl-[receptor-protein] + ATP = O-phospho-L-threonyl-[receptor-protein] + ADP + H(+). It catalyses the reaction L-seryl-[receptor-protein] + ATP = O-phospho-L-seryl-[receptor-protein] + ADP + H(+). Functionally, on ligand binding, forms a receptor complex consisting of two type II and two type I transmembrane serine/threonine kinases. Type II receptors phosphorylate and activate type I receptors which autophosphorylate, then bind and activate SMAD transcriptional regulators. Receptor for BMP2, BMP4, GDF5 and GDF6. Positively regulates chondrocyte differentiation through GDF5 interaction. Mediates induction of adipogenesis by GDF6. May promote the expression of HAMP, potentially via its interaction with BMP2. The polypeptide is Bone morphogenetic protein receptor type-1A (BMPR1A) (Homo sapiens (Human)).